The sequence spans 47 residues: Conotoxin Cal6.18 (47 aa).

Positions 1-19 (MKLTYVLIVAMLVLVVCRA) are cleaved as a signal peptide.

The protein belongs to the conotoxin O1 superfamily. May contain 3 disulfide bonds. In terms of tissue distribution, expressed by the venom duct.

Its subcellular location is the secreted. In terms of biological role, probable neurotoxin. This Californiconus californicus (California cone) protein is Conotoxin Cal6.18.